A 338-amino-acid polypeptide reads, in one-letter code: Ornithine carbamoyltransferase (338 aa).

N-acetylserine is present on Ser2. Carbamoyl phosphate contacts are provided by residues Ser67–Thr70, Arg118, His145, and Gln148. L-ornithine is bound by residues Asn185, Asp249, Ser253, and Met254. Cys289 acts as the Proton acceptor in catalysis. Carbamoyl phosphate-binding positions include Cys289 to Leu290 and Arg316.

This sequence belongs to the aspartate/ornithine carbamoyltransferase superfamily. OTCase family. As to quaternary structure, interacts with CAR1.

Its subcellular location is the cytoplasm. It catalyses the reaction carbamoyl phosphate + L-ornithine = L-citrulline + phosphate + H(+). It functions in the pathway amino-acid biosynthesis; L-arginine biosynthesis; L-arginine from L-ornithine and carbamoyl phosphate: step 1/3. With respect to regulation, forms a stable complex with CAR1 in the presence of ornithine and arginine. In this complex CAR1 retains activity, but ARG3 activity is inhibited. The polypeptide is Ornithine carbamoyltransferase (ARG3) (Saccharomyces cerevisiae (strain ATCC 204508 / S288c) (Baker's yeast)).